Reading from the N-terminus, the 220-residue chain is Deoxyribose-phosphate aldolase (220 aa).

Residue D89 is the Proton donor/acceptor of the active site. Catalysis depends on K151, which acts as the Schiff-base intermediate with acetaldehyde. K180 serves as the catalytic Proton donor/acceptor.

It belongs to the DeoC/FbaB aldolase family. DeoC type 1 subfamily.

Its subcellular location is the cytoplasm. The catalysed reaction is 2-deoxy-D-ribose 5-phosphate = D-glyceraldehyde 3-phosphate + acetaldehyde. The protein operates within carbohydrate degradation; 2-deoxy-D-ribose 1-phosphate degradation; D-glyceraldehyde 3-phosphate and acetaldehyde from 2-deoxy-alpha-D-ribose 1-phosphate: step 2/2. Its function is as follows. Catalyzes a reversible aldol reaction between acetaldehyde and D-glyceraldehyde 3-phosphate to generate 2-deoxy-D-ribose 5-phosphate. The polypeptide is Deoxyribose-phosphate aldolase (Streptococcus pneumoniae serotype 4 (strain ATCC BAA-334 / TIGR4)).